Reading from the N-terminus, the 426-residue chain is UPF0329 protein ECU06_0040 (426 aa).

Positions 136–172 are enriched in basic and acidic residues; it reads RQRKREEETERSVKELVGDEEKAKSKEEKAKSKEEKA. The tract at residues 136 to 230 is disordered; that stretch reads RQRKREEETE…GGKKKSKGGR (95 aa). The span at 220–230 shows a compositional bias: basic residues; it reads KGGKKKSKGGR.

This sequence belongs to the UPF0329 family.

This Encephalitozoon cuniculi (strain GB-M1) (Microsporidian parasite) protein is UPF0329 protein ECU06_0040.